A 175-amino-acid chain; its full sequence is Alkyl hydroperoxide reductase AhpD (175 aa).

The active-site Proton donor is Cys131. Cys131 and Cys134 form a disulfide bridge. Cys134 functions as the Cysteine sulfenic acid (-SOH) intermediate in the catalytic mechanism.

Belongs to the AhpD family.

The enzyme catalyses N(6)-[(R)-dihydrolipoyl]-L-lysyl-[lipoyl-carrier protein] + a hydroperoxide = N(6)-[(R)-lipoyl]-L-lysyl-[lipoyl-carrier protein] + an alcohol + H2O. Its function is as follows. Antioxidant protein with alkyl hydroperoxidase activity. Required for the reduction of the AhpC active site cysteine residues and for the regeneration of the AhpC enzyme activity. The polypeptide is Alkyl hydroperoxide reductase AhpD (Brucella anthropi (strain ATCC 49188 / DSM 6882 / CCUG 24695 / JCM 21032 / LMG 3331 / NBRC 15819 / NCTC 12168 / Alc 37) (Ochrobactrum anthropi)).